Here is a 645-residue protein sequence, read N- to C-terminus: tRNA 5-methylaminomethyl-2-thiouridine biosynthesis bifunctional protein MnmC (645 aa).

Residues 1–230 form a tRNA (mnm(5)s(2)U34)-methyltransferase region; the sequence is MPMSEPIDWL…KRHNLHAVFD (230 aa). An FAD-dependent cmnm(5)s(2)U34 oxidoreductase region spans residues 254-645; the sequence is LGAGIAGAAA…LASERLGRRR (392 aa).

It in the N-terminal section; belongs to the methyltransferase superfamily. tRNA (mnm(5)s(2)U34)-methyltransferase family. The protein in the C-terminal section; belongs to the DAO family. The cofactor is FAD.

Its subcellular location is the cytoplasm. The enzyme catalyses 5-aminomethyl-2-thiouridine(34) in tRNA + S-adenosyl-L-methionine = 5-methylaminomethyl-2-thiouridine(34) in tRNA + S-adenosyl-L-homocysteine + H(+). Functionally, catalyzes the last two steps in the biosynthesis of 5-methylaminomethyl-2-thiouridine (mnm(5)s(2)U) at the wobble position (U34) in tRNA. Catalyzes the FAD-dependent demodification of cmnm(5)s(2)U34 to nm(5)s(2)U34, followed by the transfer of a methyl group from S-adenosyl-L-methionine to nm(5)s(2)U34, to form mnm(5)s(2)U34. The chain is tRNA 5-methylaminomethyl-2-thiouridine biosynthesis bifunctional protein MnmC from Delftia acidovorans (strain DSM 14801 / SPH-1).